A 113-amino-acid chain; its full sequence is MPQPDSVKARLAALDRIDDELCAVLQHAQATIGALAELKRGHAALQPQLEQHVRDYYRTLEHSTVALRNEIRELDAAVGTQLLPVNIGKRAVGQDQEKLSEQLAQMDKYVGSM.

It belongs to the Mediator complex subunit 11 family. As to quaternary structure, component of the Mediator complex.

Its subcellular location is the nucleus. Functionally, component of the Mediator complex, a coactivator involved in the regulated transcription of nearly all RNA polymerase II-dependent genes. Mediator functions as a bridge to convey information from gene-specific regulatory proteins to the basal RNA polymerase II transcription machinery. Mediator is recruited to promoters by direct interactions with regulatory proteins and serves as a scaffold for the assembly of a functional pre-initiation complex with RNA polymerase II and the general transcription factors. The polypeptide is Mediator of RNA polymerase II transcription subunit 11 (MED11) (Eremothecium gossypii (strain ATCC 10895 / CBS 109.51 / FGSC 9923 / NRRL Y-1056) (Yeast)).